We begin with the raw amino-acid sequence, 446 residues long: Saccharopine dehydrogenase [NADP(+), L-glutamate-forming] (446 aa).

Residues S10–V13, C33–T35, D54–V55, I75, S97–S98, L124–P126, and S174 each bind NADP(+). L-saccharopine is bound by residues S98 to Y99 and D125. L-saccharopine-binding positions include R223 and T244–R246.

It belongs to the saccharopine dehydrogenase family. In terms of assembly, interacts with TRM112.

It carries out the reaction L-saccharopine + NADP(+) + H2O = (S)-2-amino-6-oxohexanoate + L-glutamate + NADPH + H(+). It functions in the pathway amino-acid biosynthesis; L-lysine biosynthesis via AAA pathway; L-lysine from L-alpha-aminoadipate (fungal route): step 2/3. The protein is Saccharopine dehydrogenase [NADP(+), L-glutamate-forming] (LYS9) of Saccharomyces cerevisiae (strain ATCC 204508 / S288c) (Baker's yeast).